A 98-amino-acid polypeptide reads, in one-letter code: Integration host factor subunit alpha (98 aa).

This sequence belongs to the bacterial histone-like protein family. In terms of assembly, heterodimer of an alpha and a beta chain.

Its function is as follows. This protein is one of the two subunits of integration host factor, a specific DNA-binding protein that functions in genetic recombination as well as in transcriptional and translational control. The protein is Integration host factor subunit alpha of Glaesserella parasuis serovar 5 (strain SH0165) (Haemophilus parasuis).